The chain runs to 90 residues: Probable two-component-system connector protein YmgA (90 aa).

Residues 63 to 80 show a composition bias toward polar residues; sequence SDSGGPNRRTATADNKSM. A disordered region spans residues 63-90; that stretch reads SDSGGPNRRTATADNKSMFNGKKINRIH.

Functionally, probably a connector protein for RcsB/C regulation of biofilm formation, providing additional signal input into the two-component signaling pathway. May serve to stimulate biofilm maturation, probably via the Rcs phosphorelay. Mild overexpression at 16 degrees Celsius increases the production of colanic acid, an exopolysaccharide and matrix component, and reduces adhesive curli fimbriae expression. Both of these effects require RcsB. The protein is Probable two-component-system connector protein YmgA (ymgA) of Escherichia coli (strain K12).